The following is a 414-amino-acid chain: Poly(3-hydroxyalkanoate) depolymerase C (414 aa).

An N-terminal signal peptide occupies residues 1–37; sequence MLAKQIKKANSRSTLLRKSLLFAAPIILAVSSSSVYA. The active-site Charge relay system is serine 154.

The protein belongs to the AB hydrolase superfamily. Lipase family.

It localises to the secreted. Functionally, specific for poly(hydroxyalkanoic acid) consisting of monomers of four or five carbon atoms and for P-nitrophenylbutyrate as substrates. In Paucimonas lemoignei (Pseudomonas lemoignei), this protein is Poly(3-hydroxyalkanoate) depolymerase C (phaZ1).